A 266-amino-acid polypeptide reads, in one-letter code: Orcokinin peptides type B (266 aa).

The N-terminal stretch at 1 to 20 (MTAQMFTIALLLSLSAIAAA) is a signal peptide. 3 propeptides span residues 21–46 (GTIK…GAPV), 240–246 (DYDVFPD), and 264–266 (NVE).

This sequence belongs to the orcokinin family.

It is found in the secreted. In terms of biological role, myotropic peptides that enhance both the frequency and amplitude of spontaneous hindgut contractions. The polypeptide is Orcokinin peptides type B (Procambarus clarkii (Red swamp crayfish)).